A 512-amino-acid polypeptide reads, in one-letter code: Activin receptor type-2B (512 aa).

The first 18 residues, 1–18 (MTAPWVALALLWGSLCAG), serve as a signal peptide directing secretion. At 19–137 (SGRGEAETRE…PPPTAPTLLT (119 aa)) the chain is on the extracellular side. 5 disulfides stabilise this stretch: C29-C59, C49-C77, C84-C103, C90-C102, and C104-C109. Residues N42 and N65 are each glycosylated (N-linked (GlcNAc...) asparagine). The helical transmembrane segment at 138-158 (VLAYSLLPIGGLSLIVLLAFW) threads the bilayer. Topologically, residues 159-512 (MYRHRKPPYG…VDLPPKESSI (354 aa)) are cytoplasmic. The 291-residue stretch at 190-480 (LQLLEIKARG…AGCVEERVSL (291 aa)) folds into the Protein kinase domain. Residues 196 to 204 (KARGRFGCV) and K217 each bind ATP. The active-site Proton acceptor is the D321. An interaction with DYNLT1 region spans residues 491–512 (DCLVSLVTSVTNVDLPPKESSI).

The protein belongs to the protein kinase superfamily. TKL Ser/Thr protein kinase family. TGFB receptor subfamily. As to quaternary structure, forms an activin receptor complex with activin type II receptors such as ACVR1B. Interacts with VPS39. Interacts with DYNLT1. Interacts with BMP3. Interacts with BMP2. Interacts with BMP6. Mg(2+) serves as cofactor. It depends on Mn(2+) as a cofactor. Post-translationally, phosphorylated. Constitutive phosphorylation is in part catalyzed by its own kinase activity.

The protein localises to the cell membrane. It carries out the reaction L-threonyl-[receptor-protein] + ATP = O-phospho-L-threonyl-[receptor-protein] + ADP + H(+). The catalysed reaction is L-seryl-[receptor-protein] + ATP = O-phospho-L-seryl-[receptor-protein] + ADP + H(+). Transmembrane serine/threonine kinase activin type-2 receptor forming an activin receptor complex with activin type-1 serine/threonine kinase receptors (ACVR1, ACVR1B or ACVR1c). Transduces the activin signal from the cell surface to the cytoplasm and is thus regulating many physiological and pathological processes including neuronal differentiation and neuronal survival, hair follicle development and cycling, FSH production by the pituitary gland, wound healing, extracellular matrix production, immunosuppression and carcinogenesis. Activin is also thought to have a paracrine or autocrine role in follicular development in the ovary. Within the receptor complex, the type-2 receptors act as a primary activin receptors (binds activin-A/INHBA, activin-B/INHBB as well as inhibin-A/INHA-INHBA). The type-1 receptors like ACVR1B act as downstream transducers of activin signals. Activin binds to type-2 receptor at the plasma membrane and activates its serine-threonine kinase. The activated receptor type-2 then phosphorylates and activates the type-1 receptor. Once activated, the type-1 receptor binds and phosphorylates the SMAD proteins SMAD2 and SMAD3, on serine residues of the C-terminal tail. Soon after their association with the activin receptor and subsequent phosphorylation, SMAD2 and SMAD3 are released into the cytoplasm where they interact with the common partner SMAD4. This SMAD complex translocates into the nucleus where it mediates activin-induced transcription. Inhibitory SMAD7, which is recruited to ACVR1B through FKBP1A, can prevent the association of SMAD2 and SMAD3 with the activin receptor complex, thereby blocking the activin signal. Activin signal transduction is also antagonized by the binding to the receptor of inhibin-B via the IGSF1 inhibin coreceptor. This is Activin receptor type-2B (ACVR2B) from Homo sapiens (Human).